Here is a 249-residue protein sequence, read N- to C-terminus: 5'-nucleotidase SurE (249 aa).

Asp-8, Asp-9, Ser-39, and Asn-91 together coordinate a divalent metal cation.

This sequence belongs to the SurE nucleotidase family. It depends on a divalent metal cation as a cofactor.

It is found in the cytoplasm. The catalysed reaction is a ribonucleoside 5'-phosphate + H2O = a ribonucleoside + phosphate. Nucleotidase that shows phosphatase activity on nucleoside 5'-monophosphates. In Pseudomonas fluorescens (strain SBW25), this protein is 5'-nucleotidase SurE.